Here is a 303-residue protein sequence, read N- to C-terminus: Hemolysin C (303 aa).

2 consecutive CBS domains span residues 81 to 143 (MVPR…NSPL) and 146 to 203 (LIRK…IDDE).

Belongs to the UPF0053 family. Hemolysin C subfamily.

This Rickettsia prowazekii (strain Madrid E) protein is Hemolysin C (tlyC).